A 90-amino-acid polypeptide reads, in one-letter code: MSRTVFCEHFQKEAEGLDFQLYPGELGERIFNHISKDAWAEWQKKQTMLINEKRLNMMDPTDREFLEKQMTAFLFEGKAPEIEGYTPPES.

The protein belongs to the Fe(2+)-trafficking protein family.

Its function is as follows. Could be a mediator in iron transactions between iron acquisition and iron-requiring processes, such as synthesis and/or repair of Fe-S clusters in biosynthetic enzymes. This chain is Probable Fe(2+)-trafficking protein, found in Idiomarina loihiensis (strain ATCC BAA-735 / DSM 15497 / L2-TR).